Consider the following 474-residue polypeptide: Glycogen synthase (474 aa).

ADP-alpha-D-glucose is bound at residue Lys15.

This sequence belongs to the glycosyltransferase 1 family. Bacterial/plant glycogen synthase subfamily.

The catalysed reaction is [(1-&gt;4)-alpha-D-glucosyl](n) + ADP-alpha-D-glucose = [(1-&gt;4)-alpha-D-glucosyl](n+1) + ADP + H(+). It functions in the pathway glycan biosynthesis; glycogen biosynthesis. Functionally, synthesizes alpha-1,4-glucan chains using ADP-glucose. This is Glycogen synthase from Chlamydia trachomatis serovar D (strain ATCC VR-885 / DSM 19411 / UW-3/Cx).